The chain runs to 353 residues: Mitochondrial import inner membrane translocase subunit TIM50 (353 aa).

The transit peptide at 1 to 44 (MAASAAVFSRLRSGLRLGSRGLCTRLATPPRRAPDQAAEIGSRG) directs the protein to the mitochondrion. Residues 25-60 (RLATPPRRAPDQAAEIGSRGSTKAQGPQQQPGSEGP) form a disordered region. Serine 45 is subject to Phosphoserine. Residues 45-65 (STKAQGPQQQPGSEGPSYAKK) are Mitochondrial matrix-facing. Residues 49–60 (QGPQQQPGSEGP) are compositionally biased toward low complexity. The helical transmembrane segment at 66 to 86 (VALWLAGLLGAGGTVSVVYIF) threads the bilayer. Residues 87 to 353 (GNNPVDENGA…SRLWPRSKQP (267 aa)) lie on the Mitochondrial intermembrane side of the membrane. Residues 143 to 286 (YYQPPYTLVL…LDLSAFLKTI (144 aa)) form the FCP1 homology domain. Residue serine 341 is modified to Phosphoserine.

It belongs to the TIM50 family. Component of the TIM23 complex at least composed of TIMM23, TIMM17 (TIMM17A or TIMM17B) and TIMM50; within this complex, directly interacts with TIMM23. The complex interacts with the TIMM44 component of the PAM complex and with DNAJC15. As to quaternary structure, interacts with COIL and snRNPs. Widely expressed. Expressed at higher level in brain, kidney and liver (at protein level).

The protein localises to the mitochondrion inner membrane. It is found in the nucleus speckle. Its function is as follows. Essential component of the TIM23 complex, a complex that mediates the translocation of transit peptide-containing proteins across the mitochondrial inner membrane. Has some phosphatase activity in vitro; however such activity may not be relevant in vivo. May participate in the release of snRNPs and SMN from the Cajal body. The chain is Mitochondrial import inner membrane translocase subunit TIM50 (TIMM50) from Homo sapiens (Human).